The following is a 194-amino-acid chain: MSALRLIVGLGNPGQEHAQTRHNAGFRFVDSLIERSGARWALDSKLFGETAKVDIAGQPVWLLKPATFMNLSGKSITAALRFWKIEPEHLLVAHDELDLAPGTARLKFDGGHGGQNGLRDTIGLLGHGKFHRLRVGIGHPGHKDRVVPWVLGRAGREDDAAIGTAIDAAIDVLPLAMEGHFSEAMKRLHTSRDA.

His-17 serves as a coordination point for tRNA. His-22 (proton acceptor) is an active-site residue. Residues Phe-68, Asn-70, and Asn-116 each contribute to the tRNA site.

The protein belongs to the PTH family. In terms of assembly, monomer.

Its subcellular location is the cytoplasm. The enzyme catalyses an N-acyl-L-alpha-aminoacyl-tRNA + H2O = an N-acyl-L-amino acid + a tRNA + H(+). Hydrolyzes ribosome-free peptidyl-tRNAs (with 1 or more amino acids incorporated), which drop off the ribosome during protein synthesis, or as a result of ribosome stalling. Functionally, catalyzes the release of premature peptidyl moieties from peptidyl-tRNA molecules trapped in stalled 50S ribosomal subunits, and thus maintains levels of free tRNAs and 50S ribosomes. The polypeptide is Peptidyl-tRNA hydrolase (Xanthomonas oryzae pv. oryzae (strain MAFF 311018)).